Consider the following 62-residue polypeptide: UPF0337 protein gsr0040 (62 aa).

Composition is skewed to basic and acidic residues over residues 1–15 (MGID…KDVQ) and 27–62 (DDPK…IDNV). Residues 1–62 (MGIDKRAEAT…DQAHRTIDNV (62 aa)) form a disordered region.

Belongs to the UPF0337 (CsbD) family.

In Gloeobacter violaceus (strain ATCC 29082 / PCC 7421), this protein is UPF0337 protein gsr0040.